The chain runs to 118 residues: Basic phospholipase A2 acanthin-2 (118 aa).

Cystine bridges form between Cys-11/Cys-71, Cys-27/Cys-117, Cys-29/Cys-45, Cys-44/Cys-98, Cys-51/Cys-91, Cys-60/Cys-84, and Cys-78/Cys-89. Ca(2+)-binding residues include Tyr-28, Gly-30, and Gly-32. The active site involves His-48. Position 49 (Asp-49) interacts with Ca(2+). Residue Asp-92 is part of the active site.

Ca(2+) serves as cofactor. In terms of tissue distribution, expressed by the venom gland.

It localises to the secreted. The enzyme catalyses a 1,2-diacyl-sn-glycero-3-phosphocholine + H2O = a 1-acyl-sn-glycero-3-phosphocholine + a fatty acid + H(+). Functionally, snake venom phospholipase A2 (PLA2) that potently inhibits ADP-(IC(50)=12 nM) and collagen-induced (IC(50)=4 nM) platelet aggregation when tested on human whole blood. PLA2 catalyzes the calcium-dependent hydrolysis of the 2-acyl groups in 3-sn-phosphoglycerides. In Acanthophis antarcticus (Common death adder), this protein is Basic phospholipase A2 acanthin-2.